The chain runs to 369 residues: Flagellar P-ring protein (369 aa).

Positions Met-1–Ala-24 are cleaved as a signal peptide.

Belongs to the FlgI family. As to quaternary structure, the basal body constitutes a major portion of the flagellar organelle and consists of four rings (L,P,S, and M) mounted on a central rod.

It is found in the bacterial flagellum basal body. Assembles around the rod to form the L-ring and probably protects the motor/basal body from shearing forces during rotation. This chain is Flagellar P-ring protein, found in Buchnera aphidicola subsp. Schizaphis graminum (strain Sg).